The primary structure comprises 693 residues: Homoaconitase, mitochondrial (693 aa).

The N-terminal 17 residues, 1–17 (MFRVQRLRMFSTSRALY), are a transit peptide targeting the mitochondrion. Residues cysteine 338, cysteine 405, and cysteine 408 each coordinate [4Fe-4S] cluster.

It belongs to the aconitase/IPM isomerase family. [4Fe-4S] cluster is required as a cofactor.

The protein localises to the mitochondrion. It carries out the reaction (2R,3S)-homoisocitrate = cis-homoaconitate + H2O. The protein operates within amino-acid biosynthesis; L-lysine biosynthesis via AAA pathway; L-alpha-aminoadipate from 2-oxoglutarate: step 3/5. Catalyzes the reversible hydration of cis-homoaconitate to (2R,3S)-homoisocitrate, a step in the alpha-aminoadipate pathway for lysine biosynthesis. The chain is Homoaconitase, mitochondrial (LYS4) from Kluyveromyces lactis (strain ATCC 8585 / CBS 2359 / DSM 70799 / NBRC 1267 / NRRL Y-1140 / WM37) (Yeast).